The following is a 542-amino-acid chain: MLO-like protein 7 (542 aa).

Residues 1 to 38 (MITRSRCRRSLLWFLVFHGGATATGAPSGGKELSQTPT) lie on the Extracellular side of the membrane. A helical membrane pass occupies residues 39–59 (WAVAVVCTFLILISHLLEKGL). At 60 to 82 (QRLANWLWKKHKNSLLEALEKIK) the chain is on the cytoplasmic side. The chain crosses the membrane as a helical span at residues 83 to 103 (AELMILGFISLLLTFGEPYIL). At 104 to 165 (KICVPRKAAL…ITLKGLHQLH (62 aa)) the chain is on the extracellular side. The helical transmembrane segment at 166–186 (ILLFFLAIFHIVYSLITMMLS) threads the bilayer. Residues 187-288 (RLKIRGWKKW…IKRSLEDDFK (102 aa)) lie on the Cytoplasmic side of the membrane. The helical transmembrane segment at 289–309 (LVVGISPVLWASFVIFLLFNV) threads the bilayer. Residues 310–315 (NGWRTL) lie on the Extracellular side of the membrane. The helical transmembrane segment at 316–336 (FWASIPPLLIILAVGTKLQAI) threads the bilayer. The Cytoplasmic segment spans residues 337-374 (MATMALEIVETHAVVQGMPLVQGSDRYFWFDCPQLLLH). Residues 375–395 (LIHFALFQNAFQITHFFWIWY) traverse the membrane as a helical segment. The Extracellular segment spans residues 396–414 (SFGLKSCFHKDFNLVVSKL). Residues 415-435 (FLCLGALILCSYITLPLYALV) traverse the membrane as a helical segment. At 436 to 542 (TQMGSHMKKA…QQQEMQFHNS (107 aa)) the chain is on the cytoplasmic side. The calmodulin-binding stretch occupies residues 449 to 470 (EQMAKALKKWHKDIKLKKGKAR).

This sequence belongs to the MLO family. Restricted to pollen, synergids, pistils and immature anthers. Also detected in seedlings, leaves, stems and inflorescens.

The protein resides in the cell membrane. It localises to the endomembrane system. Functionally, may be involved in modulation of pathogen defense and leaf cell death. Activity seems to be regulated by Ca(2+)-dependent calmodulin binding and seems not to require heterotrimeric G proteins. Controls pollen tube reception in the female gametophyte synergids. The chain is MLO-like protein 7 (MLO7) from Arabidopsis thaliana (Mouse-ear cress).